The chain runs to 85 residues: Neurotoxin beta-KTx 17 (85 aa).

The signal sequence occupies residues 1 to 20; the sequence is MKQYIFFLALIVLVSTFAEA. Residues 21-37 constitute a propeptide that is removed on maturation; sequence GKKTEILDKVKKVFSKG. A BetaSPN-type CS-alpha/beta domain is found at 49-85; that stretch reads ELGCPFIEKWCEDHCESKKQVGKCENFDCSCVKLGGK. Cystine bridges form between Cys-52–Cys-72, Cys-59–Cys-77, and Cys-63–Cys-79.

The protein belongs to the long chain scorpion toxin family. Class 2 subfamily. In terms of tissue distribution, expressed by the venom gland.

Its subcellular location is the secreted. In terms of biological role, has a very weak effect to block voltage-gated potassium channel Kv1.1/KCNA1. In Lychas mucronatus (Chinese swimming scorpion), this protein is Neurotoxin beta-KTx 17.